Here is a 109-residue protein sequence, read N- to C-terminus: Phosphoribosyl-ATP pyrophosphatase (109 aa).

The protein belongs to the PRA-PH family.

The protein localises to the cytoplasm. It catalyses the reaction 1-(5-phospho-beta-D-ribosyl)-ATP + H2O = 1-(5-phospho-beta-D-ribosyl)-5'-AMP + diphosphate + H(+). It participates in amino-acid biosynthesis; L-histidine biosynthesis; L-histidine from 5-phospho-alpha-D-ribose 1-diphosphate: step 2/9. The chain is Phosphoribosyl-ATP pyrophosphatase from Azorhizobium caulinodans (strain ATCC 43989 / DSM 5975 / JCM 20966 / LMG 6465 / NBRC 14845 / NCIMB 13405 / ORS 571).